The following is a 212-amino-acid chain: Transcription factor MYB8 (212 aa).

HTH myb-type domains lie at 9–61 and 62–116; these read KAHM…INYL and RPDL…KRKL. 2 DNA-binding regions (H-T-H motif) span residues 37–61 and 89–112; these read WRSL…INYL and WSLI…NTHI.

The protein localises to the nucleus. Functionally, transcription activator. In Arabidopsis thaliana (Mouse-ear cress), this protein is Transcription factor MYB8.